A 209-amino-acid polypeptide reads, in one-letter code: Uracil phosphoribosyltransferase (209 aa).

5-phospho-alpha-D-ribose 1-diphosphate is bound by residues arginine 79, arginine 104, and 131-139 (DPMLATGGS). Uracil contacts are provided by residues isoleucine 194 and 199 to 201 (GDA). Aspartate 200 contacts 5-phospho-alpha-D-ribose 1-diphosphate.

The protein belongs to the UPRTase family. Requires Mg(2+) as cofactor.

The catalysed reaction is UMP + diphosphate = 5-phospho-alpha-D-ribose 1-diphosphate + uracil. The protein operates within pyrimidine metabolism; UMP biosynthesis via salvage pathway; UMP from uracil: step 1/1. With respect to regulation, allosterically activated by GTP. Its function is as follows. Catalyzes the conversion of uracil and 5-phospho-alpha-D-ribose 1-diphosphate (PRPP) to UMP and diphosphate. This chain is Uracil phosphoribosyltransferase, found in Clostridium beijerinckii (strain ATCC 51743 / NCIMB 8052) (Clostridium acetobutylicum).